A 423-amino-acid chain; its full sequence is MGNRHGIMRPRRLASGRSAAEEEEDGEGEPGSYEAACSADPELGTFDTALRRRASRAITAVASGVEVRSLSLGSLREVTGCLLDMNQEVVRVVLDCKRDVWRSPDLFDLVEDYFEGSLHTLDFLAALDKSLHRARDSQLVLHLALQRHHHEPPAAASASELYASTLGELRQFKAAGEPFTDEFFAAFQTVYRQQMSMVGKLRRRKRRLDRRLRSVRVWRRVSGIVFLTSFAALLVCSVVAAAIAAPPVAAALAAAASMPVGSAGKWMDSLLKKYQDALHGHKEVVSAMQVGTFIAIKDLDSIRVLVEHLEVQISSMADSVEFAERDEEAVRFGIDEVKKKLELFMKSVDDLGEQADRNNMRMCHILPEYVFFINLANGNGMSESLFEMMNAFHDICRKDIKFKTSHYYLNFLSSSYQVYIAVA.

Positions 1-14 are enriched in basic residues; that stretch reads MGNRHGIMRPRRLA. The segment at 1 to 37 is disordered; the sequence is MGNRHGIMRPRRLASGRSAAEEEEDGEGEPGSYEAAC. 2 helical membrane passes run 224–244 and 247–267; these read IVFL…AAIA and PVAA…GKWM.

It belongs to the UPF0496 family.

It is found in the membrane. The chain is Putative UPF0496 protein 5 from Oryza sativa subsp. japonica (Rice).